We begin with the raw amino-acid sequence, 296 residues long: MAAGGPGAGSAAPVSSTSSLPLAALNMRVRRRLSLFLNVRTQVAADWTALAEEMDFEYLEIRQLETHADPTGRLLDAWQGRPGASVGRLLELLTKLGRDDVLLELGPSIEEDCQKYILKQQQEEAEKPLQVAAVDSSVPRTAELAGITTLDDPLGHMPERFDAFICYCPSDIQFVQEMIRQLEQTNYRLKLCVSDRDVLPGTCVWSIASELIEKRCRRMVVVVSDDYLQSKECDFQTKFALSLSPGAHQKRLIPIKYKAMKKEFPSILRFITVCDYTNPCTKSWFWTRLAKALSLP.

One can recognise a Death domain in the interval 32-109; the sequence is RLSLFLNVRT…DVLLELGPSI (78 aa). Residues 110–155 are intermediate domain; it reads EEDCQKYILKQQQEEAEKPLQVAAVDSSVPRTAELAGITTLDDPLG. The TIR domain maps to 159–293; the sequence is ERFDAFICYC…WFWTRLAKAL (135 aa). Position 244 is a phosphoserine (serine 244).

Homodimer. Also forms heterodimers with TIRAP. Binds to TLR2, TLR4, TLR5, IRAK1, IRAK2 and IRAK4 via their respective TIR domains. Interacts with IL18R1. Interacts with BMX, IL1RL1, IKBKE and IRF7. Interacts with LRRFIP1 and LRRFIP2; this interaction positively regulates Toll-like receptor (TLR) signaling in response to agonist. Interacts with FLII. LRRFIP1 and LRRFIP2 compete with FLII for MYD88-binding. Interacts with IRF1. Upon IL1B treatment, forms a complex with PELI1, IRAK1, IRAK4 and TRAF6; this complex recruits MAP3K7/TAK1, TAB1 and TAB2 to mediate NF-kappa-B activation. Direct binding of SMAD6 to PELI1 prevents the complex formation and hence negatively regulates IL1R-TLR signaling and eventually NF-kappa-B-mediated gene expression. May interact with PIK3AP1. Interacts (via TIR domain) with DHX9 (via H2A and OB-fold regions); this interaction is direct. Interacts with OTUD4 deubiquitinase; the interaction is direct. In terms of processing, ubiquitinated; undergoes 'Lys-63'-linked polyubiquitination. OTUD4 specifically hydrolyzes 'Lys-63'-linked polyubiquitinated MYD88. Deubiquitinated by USP3 that cleaves 'Lys-63'-linked ubiquitin chains leading to inhibition of MYD88-induced NF-kappa-B signaling.

The protein resides in the cytoplasm. Its subcellular location is the nucleus. Functionally, adapter protein involved in the Toll-like receptor and IL-1 receptor signaling pathway in the innate immune response. Acts via IRAK1, IRAK2, IRF7 and TRAF6, leading to NF-kappa-B activation, cytokine secretion and the inflammatory response. Increases IL-8 transcription. Involved in IL-18-mediated signaling pathway. Activates IRF1 resulting in its rapid migration into the nucleus to mediate an efficient induction of IFN-beta, NOS2/INOS, and IL12A genes. Upon TLR8 activation by GU-rich single-stranded RNA (GU-rich RNA) derived from viruses, induces IL1B release through NLRP3 inflammasome activation. MyD88-mediated signaling in intestinal epithelial cells is crucial for maintenance of gut homeostasis and controls the expression of the antimicrobial lectin REG3G in the small intestine. This chain is Myeloid differentiation primary response protein MyD88 (MYD88), found in Gorilla gorilla gorilla (Western lowland gorilla).